A 239-amino-acid chain; its full sequence is Ribosomal RNA small subunit methyltransferase G (239 aa).

S-adenosyl-L-methionine-binding positions include Gly77, Phe82, 128–129 (AE), and Arg146. The tract at residues 215-239 (DKRSQTPKKYPRKPGTPNKSPLLEK) is disordered.

This sequence belongs to the methyltransferase superfamily. RNA methyltransferase RsmG family.

Its subcellular location is the cytoplasm. Specifically methylates the N7 position of guanine in position 535 of 16S rRNA. This Staphylococcus saprophyticus subsp. saprophyticus (strain ATCC 15305 / DSM 20229 / NCIMB 8711 / NCTC 7292 / S-41) protein is Ribosomal RNA small subunit methyltransferase G.